The primary structure comprises 57 residues: Potassium channel toxin alpha-KTx 4.2 (57 aa).

An N-terminal signal peptide occupies residues 1-20 (MKVLYGILIIFILCSMFYLS). A propeptide spans 21–22 (QE) (removed by a carboxypeptidase). 3 cysteine pairs are disulfide-bonded: Cys-29-Cys-50, Cys-35-Cys-55, and Cys-39-Cys-57.

The protein belongs to the short scorpion toxin superfamily. Potassium channel inhibitor family. Alpha-KTx 04 subfamily. In terms of tissue distribution, expressed by the venom gland.

The protein resides in the secreted. Its function is as follows. Blocker for small-conductance calcium-activated potassium channels KCa2.2/KCNN2 (Kd=80 nM) and KCa2.3/KCNN3 (Kd=197 nM) and ERG1/Kv11.1/KCNH2 potassium channels (53% inhibition at 5 uM). Has also been shown to inhibit Kv1.1/KCNA1 and Nav1.7/SCN9A with a moderate potency, as well as Kv11.1/KCNH2/ERG1 and Kv1.2/KCNA2 with a low potency. This is Potassium channel toxin alpha-KTx 4.2 from Tityus serrulatus (Brazilian scorpion).